The primary structure comprises 144 residues: Transcriptional regulator SlyA (144 aa).

Residues 2 to 135 (ESPLGSDLAR…LITLIAKLEH (134 aa)) enclose the HTH marR-type domain. A DNA-binding region (H-T-H motif) is located at residues 49-72 (QIQLAKAIGIEQPSLVRTLDQLEE).

This sequence belongs to the SlyA family. As to quaternary structure, homodimer.

In terms of biological role, transcription regulator that can specifically activate or repress expression of target genes. This Escherichia coli (strain 55989 / EAEC) protein is Transcriptional regulator SlyA.